The chain runs to 586 residues: uncharacterized protein (586 aa).

The segment at 1–115 (MRVLVAETGR…NTEKLAGRDD (115 aa)) is disordered. The span at 8–20 (TGREDNVSVHSRE) shows a compositional bias: basic and acidic residues. Over residues 21–31 (VSVNGSDSGTG) the composition is skewed to polar residues. The span at 35–44 (YKLETDDEHP) shows a compositional bias: basic and acidic residues. The segment covering 76-107 (TGMNTEYNDDNSSLVNTPRDSTTYAETNSPNT) has biased composition (polar residues). WD repeat units follow at residues 184-223 (QFKE…ERRE), 253-291 (GHNA…SLAV), 293-333 (RHNE…ILHW), 335-374 (ELEY…YVSS), 387-430 (CRVT…LVLK), and 432-474 (SDAH…LINA).

The protein resides in the cytoplasm. Its subcellular location is the nucleus. This is an uncharacterized protein from Schizosaccharomyces pombe (strain 972 / ATCC 24843) (Fission yeast).